Here is a 673-residue protein sequence, read N- to C-terminus: Clotting factor G alpha subunit (673 aa).

Positions 1-19 (MLVLLCCVVLHVGVARICC) are cleaved as a signal peptide. In terms of domain architecture, GH16 spans 27-257 (LVWSDEFTNG…YVRVYQDAST (231 aa)). The active-site Nucleophile is the glutamate 137. Glutamate 142 (proton donor) is an active-site residue. Residue asparagine 186 is glycosylated (N-linked (GlcNAc...) asparagine). One can recognise a Ricin B-type lectin domain in the interval 266–404 (LDGYYFVQNR…NQLSGQWKLI (139 aa)). CBM6 domains are found at residues 411-533 (KLIQ…IKIT) and 549-671 (KLIQ…IRIT).

Belongs to the glycosyl hydrolase 16 family. As to quaternary structure, clotting factor G is a heterodimer composed of two non-covalently associated subunits, alpha and beta. Post-translationally, in presence of (1-&gt;3)-beta-glucan, proteolytically cleaved into a 55kDa and a 17kDa forms. Expressed in hemocytes (at protein level).

Functionally, component of the heterodimer clotting factor G which may play a role in defense mechanisms against fungi. Initiates a (1-&gt;3)-beta-glucan-sensing clotting pathway whereby the alpha subunit binds to glucans containing (1-&gt;3)-beta linkages, which are components of the fungal cell wall, and the beta subunit catalyzes the activation of proclotting enzyme. In Tachypleus tridentatus (Japanese horseshoe crab), this protein is Clotting factor G alpha subunit.